A 349-amino-acid chain; its full sequence is Phenylalanine--tRNA ligase alpha subunit (349 aa).

Residue Glu259 participates in Mg(2+) binding.

This sequence belongs to the class-II aminoacyl-tRNA synthetase family. Phe-tRNA synthetase alpha subunit type 1 subfamily. Tetramer of two alpha and two beta subunits. The cofactor is Mg(2+).

Its subcellular location is the cytoplasm. It carries out the reaction tRNA(Phe) + L-phenylalanine + ATP = L-phenylalanyl-tRNA(Phe) + AMP + diphosphate + H(+). This is Phenylalanine--tRNA ligase alpha subunit from Lactobacillus delbrueckii subsp. bulgaricus (strain ATCC 11842 / DSM 20081 / BCRC 10696 / JCM 1002 / NBRC 13953 / NCIMB 11778 / NCTC 12712 / WDCM 00102 / Lb 14).